The chain runs to 484 residues: Replication-associated protein (484 aa).

The Nuclear localization signal signature appears at 146–153 (IRKYHQSV).

The protein resides in the host nucleus. In terms of biological role, plays an essential for the replication of viral DNA. Presumably cleaves viral genomic dsRNA replicative form to initiate rolling circle replication. The chain is Replication-associated protein from Chaetoceros (Chaetoceros sp. DNA virus 7).